The chain runs to 294 residues: 4-hydroxy-tetrahydrodipicolinate synthase (294 aa).

T45 lines the pyruvate pocket. Catalysis depends on Y133, which acts as the Proton donor/acceptor. K161 acts as the Schiff-base intermediate with substrate in catalysis. Pyruvate is bound at residue I203.

It belongs to the DapA family. As to quaternary structure, homotetramer; dimer of dimers.

It localises to the cytoplasm. The catalysed reaction is L-aspartate 4-semialdehyde + pyruvate = (2S,4S)-4-hydroxy-2,3,4,5-tetrahydrodipicolinate + H2O + H(+). Its pathway is amino-acid biosynthesis; L-lysine biosynthesis via DAP pathway; (S)-tetrahydrodipicolinate from L-aspartate: step 3/4. Catalyzes the condensation of (S)-aspartate-beta-semialdehyde [(S)-ASA] and pyruvate to 4-hydroxy-tetrahydrodipicolinate (HTPA). This is 4-hydroxy-tetrahydrodipicolinate synthase from Buchnera aphidicola subsp. Baizongia pistaciae (strain Bp).